The chain runs to 63 residues: ATP synthase F(0) complex subunit 8 (63 aa).

A helical membrane pass occupies residues 8-24; sequence TWFLTILSVMLTLFTLL. Lysine 57 carries the post-translational modification N6-acetyllysine.

The protein belongs to the ATPase protein 8 family. Component of the ATP synthase complex composed at least of ATP5F1A/subunit alpha, ATP5F1B/subunit beta, ATP5MC1/subunit c (homooctomer), MT-ATP6/subunit a, MT-ATP8/subunit 8, ATP5ME/subunit e, ATP5MF/subunit f, ATP5MG/subunit g, ATP5MK/subunit k, ATP5MJ/subunit j, ATP5F1C/subunit gamma, ATP5F1D/subunit delta, ATP5F1E/subunit epsilon, ATP5PF/subunit F6, ATP5PB/subunit b, ATP5PD/subunit d, ATP5PO/subunit OSCP. ATP synthase complex consists of a soluble F(1) head domain (subunits alpha(3) and beta(3)) - the catalytic core - and a membrane F(0) domain - the membrane proton channel (subunits c, a, 8, e, f, g, k and j). These two domains are linked by a central stalk (subunits gamma, delta, and epsilon) rotating inside the F1 region and a stationary peripheral stalk (subunits F6, b, d, and OSCP). Interacts with PRICKLE3.

It is found in the mitochondrion membrane. Subunit 8, of the mitochondrial membrane ATP synthase complex (F(1)F(0) ATP synthase or Complex V) that produces ATP from ADP in the presence of a proton gradient across the membrane which is generated by electron transport complexes of the respiratory chain. ATP synthase complex consist of a soluble F(1) head domain - the catalytic core - and a membrane F(1) domain - the membrane proton channel. These two domains are linked by a central stalk rotating inside the F(1) region and a stationary peripheral stalk. During catalysis, ATP synthesis in the catalytic domain of F(1) is coupled via a rotary mechanism of the central stalk subunits to proton translocation. In vivo, can only synthesize ATP although its ATP hydrolase activity can be activated artificially in vitro. Part of the complex F(0) domain. In Physeter macrocephalus (Sperm whale), this protein is ATP synthase F(0) complex subunit 8.